The chain runs to 863 residues: Probable beta-glucosidase A (863 aa).

A signal peptide spans 1-19 (MKLGWLEAAALTAASVASA). Asn-65, Asn-214, and Asn-255 each carry an N-linked (GlcNAc...) asparagine glycan. Residue Asp-283 is part of the active site. N-linked (GlcNAc...) asparagine glycosylation is found at Asn-318, Asn-325, Asn-357, Asn-493, Asn-526, Asn-545, Asn-567, Asn-664, and Asn-715. The disordered stretch occupies residues 720–754 (KESSGDPNYGWDDEDYIPEGAKDGSPQDVLPSGGG).

It belongs to the glycosyl hydrolase 3 family.

It localises to the secreted. It catalyses the reaction Hydrolysis of terminal, non-reducing beta-D-glucosyl residues with release of beta-D-glucose.. The protein operates within glycan metabolism; cellulose degradation. Beta-glucosidases are one of a number of cellulolytic enzymes involved in the degradation of cellulosic biomass. Catalyzes the last step releasing glucose from the inhibitory cellobiose. The polypeptide is Probable beta-glucosidase A (bglA) (Emericella nidulans (strain FGSC A4 / ATCC 38163 / CBS 112.46 / NRRL 194 / M139) (Aspergillus nidulans)).